Here is a 284-residue protein sequence, read N- to C-terminus: Tropomyosin (284 aa).

Residues 1-284 (MDSIKKKMMA…DTTFAELTSF (284 aa)) are a coiled coil. The interval 97–140 (EDFEQSSGRLTETSTKLDDASKAAEESERNRKTLETRSISDDER) is disordered. The span at 101-110 (QSSGRLTETS) shows a compositional bias: polar residues. The span at 111–140 (TKLDDASKAAEESERNRKTLETRSISDDER) shows a compositional bias: basic and acidic residues.

This sequence belongs to the tropomyosin family. In terms of assembly, homodimer.

In terms of biological role, tropomyosin, in association with the troponin complex, plays a central role in the calcium dependent regulation of muscle contraction. This is Tropomyosin from Echinococcus multilocularis (Fox tapeworm).